A 238-amino-acid chain; its full sequence is MVLLLLVAIPLLVHSSRGPTHYEMLGRCRMVCDPHASRGQGPDGAPASVPSLPPGAKGEVGRRGKAGLRGPPGPPGPRGPPGEPGRPGPPGPPGPGPGGAAPPAGYVPRIAFYAGLRRPHEGYEVLRFDDVVTNVGNAYEAASGKFTCPMPGVYFFAYHVLMRGGDGTSMWADLMKNGQVRASAIAQDADQNYDYASNSVILHLDVGDEVFIKLDGGKVHGGNTNKYSTFSGFIIYPD.

Residues 1–15 (MVLLLLVAIPLLVHS) form the signal peptide. The interval 37 to 102 (SRGQGPDGAP…PGPGPGGAAP (66 aa)) is disordered. The 44-residue stretch at 53 to 96 (PPGAKGEVGRRGKAGLRGPPGPPGPRGPPGEPGRPGPPGPPGPG) folds into the Collagen-like domain. The segment covering 71-96 (PPGPPGPRGPPGEPGRPGPPGPPGPG) has biased composition (pro residues). In terms of domain architecture, C1q spans 105 to 238 (GYVPRIAFYA…TFSGFIIYPD (134 aa)).

As to quaternary structure, forms homooligomers, predominantly dimers or trimers. Forms heterooligomers with C1QL1, C1QL2 and C1QL3, when proteins are coexpressed; this interaction does not occur after secretion. Interacts with ADGRB3. Highly expressed in testis and adipose tissue, brown adipose tissue expressing higher levels than subcutaneous and visceral white adipose tissue. In gonadal fat pad, expressed at lower levels in adipocytes than in the stromal vascular fraction (VSP), which contains preadipocytes, fibroblasts, endothelial cells and occasional immune cells. Expression exhibits sexually dimorphism, with higher levels in females than in males.

The protein localises to the secreted. Its function is as follows. May regulate the number of excitatory synapses that are formed on hippocampus neurons. Has no effect on inhibitory synapses. May inhibit adipocyte differentiation at an early stage of the process. The protein is Complement C1q-like protein 4 (C1ql4) of Mus musculus (Mouse).